Consider the following 663-residue polypeptide: tRNA (guanine(26)-N(2))-dimethyltransferase (663 aa).

The transit peptide at 1–16 (MSLARTILWLSRPLRP) directs the protein to the mitochondrion. Residues 56–498 (ATVTEGAAKI…APPEALWDIM (443 aa)) enclose the Trm1 methyltransferase domain. Arg83 is an S-adenosyl-L-methionine binding site. Position 121 is a phosphoserine (Ser121). S-adenosyl-L-methionine contacts are provided by Arg165 and Asp183. Residues Cys347, Cys350, Cys383, and Cys386 each contribute to the Zn(2+) site. Ser516 carries the phosphoserine modification. The segment at 534–574 (IREDANPSSRQRGLKRFQANPEANWGPRPRARPGGKAASED) is disordered. Residues 540-572 (PSSRQRGLKRFQANPEANWGPRPRARPGGKAAS) carry the Nuclear localization signal motif. A C3H1-type zinc finger spans residues 599–626 (RLKTFPCKRFKEGTCQLGDQCCYSHSPA). Ser624 carries the phosphoserine modification. Residues 632–663 (GDIPIEECPETTTKISPGPKAAAGGIPGPGVD) form a disordered region.

It belongs to the class I-like SAM-binding methyltransferase superfamily. Trm1 family.

The protein resides in the mitochondrion. It localises to the nucleus. The protein localises to the cytoplasm. The enzyme catalyses guanosine(26) in tRNA + 2 S-adenosyl-L-methionine = N(2)-dimethylguanosine(26) in tRNA + 2 S-adenosyl-L-homocysteine + 2 H(+). Its function is as follows. Dimethylates a single guanine residue at position 26 of most nuclear- and mitochondrial-encoded tRNAs using S-adenosyl-L-methionine as donor of the methyl groups. tRNA guanine(26)-dimethylation is required for redox homeostasis and ensure proper cellular proliferation and oxidative stress survival. This Mus musculus (Mouse) protein is tRNA (guanine(26)-N(2))-dimethyltransferase.